The sequence spans 199 residues: ATP-dependent Clp protease proteolytic subunit (199 aa).

Ser98 serves as the catalytic Nucleophile. His123 is a catalytic residue.

It belongs to the peptidase S14 family. As to quaternary structure, fourteen ClpP subunits assemble into 2 heptameric rings which stack back to back to give a disk-like structure with a central cavity, resembling the structure of eukaryotic proteasomes.

It is found in the cytoplasm. The enzyme catalyses Hydrolysis of proteins to small peptides in the presence of ATP and magnesium. alpha-casein is the usual test substrate. In the absence of ATP, only oligopeptides shorter than five residues are hydrolyzed (such as succinyl-Leu-Tyr-|-NHMec, and Leu-Tyr-Leu-|-Tyr-Trp, in which cleavage of the -Tyr-|-Leu- and -Tyr-|-Trp bonds also occurs).. Functionally, cleaves peptides in various proteins in a process that requires ATP hydrolysis. Has a chymotrypsin-like activity. Plays a major role in the degradation of misfolded proteins. This Clostridium botulinum (strain Alaska E43 / Type E3) protein is ATP-dependent Clp protease proteolytic subunit.